The chain runs to 253 residues: 5'/3'-nucleotidase SurE (253 aa).

Positions 8, 9, 39, and 92 each coordinate a divalent metal cation.

This sequence belongs to the SurE nucleotidase family. It depends on a divalent metal cation as a cofactor.

It localises to the cytoplasm. It carries out the reaction a ribonucleoside 5'-phosphate + H2O = a ribonucleoside + phosphate. The enzyme catalyses a ribonucleoside 3'-phosphate + H2O = a ribonucleoside + phosphate. It catalyses the reaction [phosphate](n) + H2O = [phosphate](n-1) + phosphate + H(+). Nucleotidase with a broad substrate specificity as it can dephosphorylate various ribo- and deoxyribonucleoside 5'-monophosphates and ribonucleoside 3'-monophosphates with highest affinity to 3'-AMP. Also hydrolyzes polyphosphate (exopolyphosphatase activity) with the preference for short-chain-length substrates (P20-25). Might be involved in the regulation of dNTP and NTP pools, and in the turnover of 3'-mononucleotides produced by numerous intracellular RNases (T1, T2, and F) during the degradation of various RNAs. This Citrobacter koseri (strain ATCC BAA-895 / CDC 4225-83 / SGSC4696) protein is 5'/3'-nucleotidase SurE.